The primary structure comprises 337 residues: PHD finger protein 11 (337 aa).

A C2HC pre-PHD-type zinc finger spans residues lysine 42–leucine 78. The segment at leucine 108–alanine 160 adopts a PHD-type zinc-finger fold.

Interacts with BRCA1 and RELA.

It is found in the nucleus. Its function is as follows. Positive regulator of Th1-type cytokine gene expression. This chain is PHD finger protein 11 (PHF11), found in Bos taurus (Bovine).